The chain runs to 761 residues: Phosphoribosylformylglycinamidine synthase subunit PurL (761 aa).

Residue His48 is part of the active site. ATP-binding residues include Tyr51 and Lys90. Position 92 (Glu92) interacts with Mg(2+). Residues 93–96 and Arg115 contribute to the substrate site; that span reads SHNH. The Proton acceptor role is filled by His94. Position 116 (Asp116) interacts with Mg(2+). Position 239 (Gln239) interacts with substrate. Asp267 is a Mg(2+) binding site. 311-313 provides a ligand contact to substrate; the sequence is ESQ. Residues Asp499 and Gly536 each contribute to the ATP site. Residue Asn537 coordinates Mg(2+). Ser539 lines the substrate pocket.

This sequence belongs to the FGAMS family. In terms of assembly, monomer. Part of the FGAM synthase complex composed of 1 PurL, 1 PurQ and 2 PurS subunits.

It is found in the cytoplasm. The enzyme catalyses N(2)-formyl-N(1)-(5-phospho-beta-D-ribosyl)glycinamide + L-glutamine + ATP + H2O = 2-formamido-N(1)-(5-O-phospho-beta-D-ribosyl)acetamidine + L-glutamate + ADP + phosphate + H(+). The protein operates within purine metabolism; IMP biosynthesis via de novo pathway; 5-amino-1-(5-phospho-D-ribosyl)imidazole from N(2)-formyl-N(1)-(5-phospho-D-ribosyl)glycinamide: step 1/2. In terms of biological role, part of the phosphoribosylformylglycinamidine synthase complex involved in the purines biosynthetic pathway. Catalyzes the ATP-dependent conversion of formylglycinamide ribonucleotide (FGAR) and glutamine to yield formylglycinamidine ribonucleotide (FGAM) and glutamate. The FGAM synthase complex is composed of three subunits. PurQ produces an ammonia molecule by converting glutamine to glutamate. PurL transfers the ammonia molecule to FGAR to form FGAM in an ATP-dependent manner. PurS interacts with PurQ and PurL and is thought to assist in the transfer of the ammonia molecule from PurQ to PurL. This Thermosynechococcus vestitus (strain NIES-2133 / IAM M-273 / BP-1) protein is Phosphoribosylformylglycinamidine synthase subunit PurL.